The chain runs to 467 residues: Histidine--tRNA ligase (467 aa).

Belongs to the class-II aminoacyl-tRNA synthetase family. In terms of assembly, homodimer.

The protein localises to the cytoplasm. It carries out the reaction tRNA(His) + L-histidine + ATP = L-histidyl-tRNA(His) + AMP + diphosphate + H(+). The polypeptide is Histidine--tRNA ligase (Gloeobacter violaceus (strain ATCC 29082 / PCC 7421)).